A 415-amino-acid chain; its full sequence is Isocitrate dehydrogenase [NADP] 1 (415 aa).

Threonine 104 provides a ligand contact to NADP(+). D-threo-isocitrate contacts are provided by serine 113, asparagine 115, arginine 119, arginine 129, and arginine 153. Aspartate 307 contributes to the Mg(2+) binding site. Residues 339 to 345, asparagine 352, tyrosine 390, and arginine 394 each bind NADP(+); that span reads HGTAPKY.

It belongs to the isocitrate and isopropylmalate dehydrogenases family. As to quaternary structure, homodimer. The cofactor is Mg(2+). Requires Mn(2+) as cofactor.

It carries out the reaction D-threo-isocitrate + NADP(+) = 2-oxoglutarate + CO2 + NADPH. Its function is as follows. Catalyzes the oxidative decarboxylation of isocitrate to 2-oxoglutarate and carbon dioxide with the concomitant reduction of NADP(+). This is Isocitrate dehydrogenase [NADP] 1 from Colwellia maris.